A 228-amino-acid chain; its full sequence is 5'-methylthioadenosine/S-adenosylhomocysteine nucleosidase (228 aa).

Glutamate 11 functions as the Proton acceptor in the catalytic mechanism. Substrate-binding positions include glycine 77, isoleucine 151, and 172–173 (ME). Residue aspartate 196 is the Proton donor of the active site.

The protein belongs to the PNP/UDP phosphorylase family. MtnN subfamily.

The catalysed reaction is S-adenosyl-L-homocysteine + H2O = S-(5-deoxy-D-ribos-5-yl)-L-homocysteine + adenine. It carries out the reaction S-methyl-5'-thioadenosine + H2O = 5-(methylsulfanyl)-D-ribose + adenine. It catalyses the reaction 5'-deoxyadenosine + H2O = 5-deoxy-D-ribose + adenine. Its pathway is amino-acid biosynthesis; L-methionine biosynthesis via salvage pathway; S-methyl-5-thio-alpha-D-ribose 1-phosphate from S-methyl-5'-thioadenosine (hydrolase route): step 1/2. Functionally, catalyzes the irreversible cleavage of the glycosidic bond in both 5'-methylthioadenosine (MTA) and S-adenosylhomocysteine (SAH/AdoHcy) to adenine and the corresponding thioribose, 5'-methylthioribose and S-ribosylhomocysteine, respectively. Also cleaves 5'-deoxyadenosine, a toxic by-product of radical S-adenosylmethionine (SAM) enzymes, into 5-deoxyribose and adenine. This is 5'-methylthioadenosine/S-adenosylhomocysteine nucleosidase from Staphylococcus aureus (strain JH1).